We begin with the raw amino-acid sequence, 328 residues long: ATP synthase mitochondrial F1 complex assembly factor 1 (328 aa).

Residues 1 to 57 constitute a mitochondrion transit peptide; the sequence is MAAVVVAAAGGAGPAVLQVAGLYRGLCAVRSRALGLGLVSPAQLRVFPVRPGSGRPE.

This sequence belongs to the ATP11 family. As to quaternary structure, interacts with ATP5F1B; involved in the assembly of the F1 component of the mitochondrial ATP synthase (ATPase). Weakly expressed in muscle.

The protein resides in the mitochondrion inner membrane. Its function is as follows. Has a complex stabilizing activity in the assembly of the mitochondrial F1-F0 complex. This chain is ATP synthase mitochondrial F1 complex assembly factor 1, found in Homo sapiens (Human).